Here is a 706-residue protein sequence, read N- to C-terminus: Lysophospholipase 2 (706 aa).

A signal peptide spans 1-19; that stretch reads MQLRNILQASSLISGLSLA. The 553-residue stretch at 36 to 588 folds into the PLA2c domain; that stretch reads PCPSDDTSLV…ADYCWNGTLS (553 aa). 25 N-linked (GlcNAc...) asparagine glycosylation sites follow: Asn-47, Asn-80, Asn-94, Asn-125, Asn-162, Asn-181, Asn-193, Asn-217, Asn-279, Asn-309, Asn-365, Asn-390, Asn-491, Asn-515, Asn-524, Asn-543, Asn-567, Asn-584, Asn-598, Asn-630, Asn-634, Asn-642, Asn-648, Asn-652, and Asn-658. A disordered region spans residues 627 to 672; it reads TSGNTTSNSTTSTSSNVTSNSNSSSNTTLNSNSSSSSISSSTARSS. Asn-680 carries GPI-anchor amidated asparagine lipidation. Residues 681-706 constitute a propeptide, removed in mature form; the sequence is AAAISYANTNTLMSLLGAITALFGLI.

Belongs to the lysophospholipase family. In terms of processing, the GPI-anchor is attached to the protein in the endoplasmic reticulum and serves to target the protein to the cell surface. There, the glucosamine-inositol phospholipid moiety is cleaved off and the GPI-modified mannoprotein is covalently attached via its lipidless GPI glycan remnant to the 1,6-beta-glucan of the outer cell wall layer.

The protein localises to the secreted. It is found in the cell wall. Its subcellular location is the membrane. It catalyses the reaction a 1-acyl-sn-glycero-3-phosphocholine + H2O = sn-glycerol 3-phosphocholine + a fatty acid + H(+). The catalysed reaction is 1-hexadecanoyl-sn-glycero-3-phosphoethanolamine + H2O = sn-glycero-3-phosphoethanolamine + hexadecanoate + H(+). It carries out the reaction 1-hexadecanoyl-sn-glycero-3-phosphocholine + H2O = sn-glycerol 3-phosphocholine + hexadecanoate + H(+). The enzyme catalyses 1-hexadecanoyl-sn-glycero-3-phospho-L-serine + H2O = sn-glycero-3-phospho-L-serine + hexadecanoate + H(+). It catalyses the reaction 1,2-dihexadecanoyl-sn-glycero-3-phosphocholine + H2O = 1-hexadecanoyl-sn-glycero-3-phosphocholine + hexadecanoate + H(+). Sequentially removes both fatty acyl groups from diacylglycerophospholipids and therefore has both phospholipase A and lysophospholipase activities. However, it does not display transacylase activity. Substrate preference is phosphatidylserine &gt; phosphatidylinositol &gt; phosphatidylcholine &gt; phosphatidylethanolamine. The substrate specificity is pH- and ion-dependent. In contrast with activities observed at optimum pH 3.5, the order of substrate preference at pH 5.5 is phosphatidylserine = phosphatidylethanolamine &gt; phosphatidylcholine &gt; phosphatidylinositol. This is Lysophospholipase 2 (PLB2) from Saccharomyces cerevisiae (strain ATCC 204508 / S288c) (Baker's yeast).